Consider the following 461-residue polypeptide: BSD domain-containing protein 1 (461 aa).

2 positions are modified to phosphoserine: Ser123 and Ser197. A BSD domain is found at 177-229 (WLSQFCLEEKKGEISELLVGSPSIRALYTKMVPAAVSHSEFWHRYFYKVHQLE). Residues 239-384 (KQRAEQSISE…SGPEPRPPAR (146 aa)) form a disordered region. The span at 250 to 259 (PGWEEEEEEL) shows a compositional bias: acidic residues. Residues 295-318 (LVTPVEPPTEVTPSESSESVSLVT) show a composition bias toward low complexity. The residue at position 387 (Thr387) is a Phosphothreonine. The segment at 398–430 (VFELNSDSGKSTPSNNGKKGSSTDISEDWEKDF) is disordered. Polar residues predominate over residues 402 to 421 (NSDSGKSTPSNNGKKGSSTD). 3 positions are modified to phosphoserine: Ser418, Ser419, and Ser449.

This chain is BSD domain-containing protein 1 (BSDC1), found in Bos taurus (Bovine).